The following is a 333-amino-acid chain: Adenosine deaminase (333 aa).

Zn(2+)-binding residues include His-12 and His-14. His-14, Asp-16, and Gly-170 together coordinate substrate. His-197 provides a ligand contact to Zn(2+). The active-site Proton donor is Glu-200. Asp-278 is a Zn(2+) binding site. Residue Asp-279 participates in substrate binding.

The protein belongs to the metallo-dependent hydrolases superfamily. Adenosine and AMP deaminases family. Adenosine deaminase subfamily. Zn(2+) is required as a cofactor.

The enzyme catalyses adenosine + H2O + H(+) = inosine + NH4(+). It carries out the reaction 2'-deoxyadenosine + H2O + H(+) = 2'-deoxyinosine + NH4(+). Functionally, catalyzes the hydrolytic deamination of adenosine and 2-deoxyadenosine. This chain is Adenosine deaminase, found in Pseudoalteromonas translucida (strain TAC 125).